Consider the following 288-residue polypeptide: Acetyl-coenzyme A carboxylase carboxyl transferase subunit beta (288 aa).

Positions 30–288 (IMTKCPKCKK…KMHQEVKTNA (259 aa)) constitute a CoA carboxyltransferase N-terminal domain. Residues Cys-34, Cys-37, Cys-53, and Cys-56 each contribute to the Zn(2+) site. The C4-type zinc-finger motif lies at 34–56 (CPKCKKIMYTKELAENLNVCFNC).

Belongs to the AccD/PCCB family. In terms of assembly, acetyl-CoA carboxylase is a heterohexamer composed of biotin carboxyl carrier protein (AccB), biotin carboxylase (AccC) and two subunits each of ACCase subunit alpha (AccA) and ACCase subunit beta (AccD). It depends on Zn(2+) as a cofactor.

Its subcellular location is the cytoplasm. The enzyme catalyses N(6)-carboxybiotinyl-L-lysyl-[protein] + acetyl-CoA = N(6)-biotinyl-L-lysyl-[protein] + malonyl-CoA. Its pathway is lipid metabolism; malonyl-CoA biosynthesis; malonyl-CoA from acetyl-CoA: step 1/1. In terms of biological role, component of the acetyl coenzyme A carboxylase (ACC) complex. Biotin carboxylase (BC) catalyzes the carboxylation of biotin on its carrier protein (BCCP) and then the CO(2) group is transferred by the transcarboxylase to acetyl-CoA to form malonyl-CoA. This chain is Acetyl-coenzyme A carboxylase carboxyl transferase subunit beta, found in Staphylococcus saprophyticus subsp. saprophyticus (strain ATCC 15305 / DSM 20229 / NCIMB 8711 / NCTC 7292 / S-41).